A 360-amino-acid chain; its full sequence is Protein-glutamate methylesterase/protein-glutamine glutaminase 3 (360 aa).

In terms of domain architecture, Response regulatory spans 14 to 131 (RVLVIDDSAT…AEGVQAYAEE (118 aa)). A 4-aspartylphosphate modification is found at aspartate 65. Residues 169-360 (AGKDGRVVAV…AGKLMELDGA (192 aa)) form the CheB-type methylesterase domain. Residues serine 181, histidine 207, and aspartate 303 contribute to the active site.

Belongs to the CheB family. Post-translationally, phosphorylated by CheA. Phosphorylation of the N-terminal regulatory domain activates the methylesterase activity.

The protein localises to the cytoplasm. The catalysed reaction is [protein]-L-glutamate 5-O-methyl ester + H2O = L-glutamyl-[protein] + methanol + H(+). It catalyses the reaction L-glutaminyl-[protein] + H2O = L-glutamyl-[protein] + NH4(+). Involved in chemotaxis. Part of a chemotaxis signal transduction system that modulates chemotaxis in response to various stimuli. Catalyzes the demethylation of specific methylglutamate residues introduced into the chemoreceptors (methyl-accepting chemotaxis proteins or MCP) by CheR. Also mediates the irreversible deamidation of specific glutamine residues to glutamic acid. This Burkholderia thailandensis (strain ATCC 700388 / DSM 13276 / CCUG 48851 / CIP 106301 / E264) protein is Protein-glutamate methylesterase/protein-glutamine glutaminase 3.